Here is a 437-residue protein sequence, read N- to C-terminus: Lipid II isoglutaminyl synthase (glutamine-hydrolyzing) subunit MurT (437 aa).

The Zn(2+) site is built by C202, C205, C224, and C226. Residue D349 is part of the active site.

This sequence belongs to the MurCDEF family. MurT subfamily. In terms of assembly, forms a heterodimer with GatD.

It carries out the reaction beta-D-GlcNAc-(1-&gt;4)-Mur2Ac(oyl-L-Ala-gamma-D-Glu-L-Lys-D-Ala-D-Ala)-di-trans,octa-cis-undecaprenyl diphosphate + L-glutamine + ATP + H2O = beta-D-GlcNAc-(1-&gt;4)-Mur2Ac(oyl-L-Ala-D-isoglutaminyl-L-Lys-D-Ala-D-Ala)-di-trans,octa-cis-undecaprenyl diphosphate + L-glutamate + ADP + phosphate + H(+). The enzyme catalyses beta-D-GlcNAc-(1-&gt;4)-Mur2Ac(oyl-L-Ala-gamma-D-Glu-L-Lys-D-Ala-D-Ala)-di-trans,octa-cis-undecaprenyl diphosphate + ATP = beta-D-GlcNAc-(1-&gt;4)-Mur2Ac(oyl-L-Ala-gamma-D-O-P-Glu-L-Lys-D-Ala-D-Ala)-di-trans,octa-cis-undecaprenyl diphosphate + ADP. The catalysed reaction is beta-D-GlcNAc-(1-&gt;4)-Mur2Ac(oyl-L-Ala-gamma-D-O-P-Glu-L-Lys-D-Ala-D-Ala)-di-trans,octa-cis-undecaprenyl diphosphate + NH4(+) = beta-D-GlcNAc-(1-&gt;4)-Mur2Ac(oyl-L-Ala-D-isoglutaminyl-L-Lys-D-Ala-D-Ala)-di-trans,octa-cis-undecaprenyl diphosphate + phosphate + H(+). Its pathway is cell wall biogenesis; peptidoglycan biosynthesis. Its function is as follows. The lipid II isoglutaminyl synthase complex catalyzes the formation of alpha-D-isoglutamine in the cell wall lipid II stem peptide. The MurT subunit catalyzes the ATP-dependent amidation of D-glutamate residue of lipid II, converting it to an isoglutamine residue. In Staphylococcus aureus (strain COL), this protein is Lipid II isoglutaminyl synthase (glutamine-hydrolyzing) subunit MurT.